The sequence spans 451 residues: Cysteine desulfurase (451 aa).

Pyridoxal 5'-phosphate contacts are provided by alanine 121, threonine 122, glutamine 229, serine 249, and histidine 251. Position 252 is an N6-(pyridoxal phosphate)lysine (lysine 252). Threonine 289 is a pyridoxal 5'-phosphate binding site. Cysteine 375 (cysteine persulfide intermediate) is an active-site residue. Position 375 (cysteine 375) interacts with [2Fe-2S] cluster. Cysteine 375 provides a ligand contact to Zn(2+). Position 375 is a cysteine persulfide (cysteine 375).

Belongs to the class-V pyridoxal-phosphate-dependent aminotransferase family. NifS/IscS subfamily. Homodimer. Component of the mitochondrial core iron-sulfur cluster (ISC) complex composed of NFS1, LYRM4, NDUFAB1, ISCU, FXN, and FDX2; this complex is a heterohexamer containing two copies of each monomer. Component of cyteine desulfurase complex composed of NFS1, LYRM4 and NDUFAB1; this complex contributes to the activation of cysteine desulfurase activity and NFS1 stabilization. Interacts (homodimer form) with ISCU (D-state); each monomer interacts with the C-terminal regions of each NFS1 monomer. Interacts with HSPA9. Interacts (via homodimer form) with FDX2. Interacts (via homodimer form) with FXN. Interacts with LYRM4. Component of a complex composed of FXN, NFS1, LYRM4 and ISCU. In terms of assembly, monomer. Homodimer. Oligomer. Interacts with ISCU. Component of the cysteine desulfurase complex composed of NFS1 and LYRM4; this complex contributes to the activation of cysteine desulfurase activity. Interacts with MOCS3. Pyridoxal 5'-phosphate is required as a cofactor. In terms of processing, N-gluconoylated. Cysteine persulfide intermediate is reduced by thiol-containing molecules like glutathione and L-cysteine. Persulfide reduction is a rate-limiting step of cysteine desulfurase catalytic cycle.

Its subcellular location is the mitochondrion. The protein localises to the cytoplasm. It localises to the nucleus. It is found in the cytoskeleton. The protein resides in the microtubule organizing center. Its subcellular location is the centrosome. The enzyme catalyses (sulfur carrier)-H + L-cysteine = (sulfur carrier)-SH + L-alanine. The catalysed reaction is L-cysteinyl-[cysteine desulfurase] + L-cysteine = S-sulfanyl-L-cysteinyl-[cysteine desulfurase] + L-alanine. With respect to regulation, active only in complex with LYRM4. Its function is as follows. Cysteine desulfurase, of the core iron-sulfur cluster (ISC) assembly complex, that catalyzes the desulfuration of L-cysteine to L-alanine, as component of the cysteine desulfurase complex leading to the formation of a cysteine persulfide intermediate at the active site cysteine residue and participates in the [2Fe-2S] clusters assembly on the scaffolding protein ISCU. The persulfide is then transferred on the flexible Cys loop from the catalytic site of NFS1 to the surface of NFS1. After the NFS1-linked persulfide sulfur is transferred to one of the conserved Cys residues of the scaffold, a reaction assisted by FXN. The core iron-sulfur cluster (ISC) assembly complex is involved in the de novo synthesis of a [2Fe-2S] cluster, the first step of the mitochondrial iron-sulfur protein biogenesis. This process is initiated by the cysteine desulfurase complex (NFS1:LYRM4:NDUFAB1) that produces persulfide which is delivered on the scaffold protein ISCU in a FXN-dependent manner. Then this complex is stabilized by FDX2 which provides reducing equivalents to accomplish the [2Fe-2S] cluster assembly. Finally, the [2Fe-2S] cluster is transferred from ISCU to chaperone proteins, including HSCB, HSPA9 and GLRX5. May catalyze the desulfuration of L-cysteine to L-alanine as component of the cysteine desulfurase complex (NFS1:LYRM4), leading to the formation of a cysteine persulfide intermediate. Acts as a sulfur donor for MOCS3 by transferring the sulfur of the cysteine persulfide intermediate on MOCS3. The chain is Cysteine desulfurase from Rattus norvegicus (Rat).